The chain runs to 745 residues: Phosphoribosylformylglycinamidine synthase subunit PurL (745 aa).

Residue H54 is part of the active site. Y57 and K96 together coordinate ATP. Residue E98 participates in Mg(2+) binding. Substrate-binding positions include 99 to 102 (SHNH) and R121. Residue H100 is the Proton acceptor of the active site. A Mg(2+)-binding site is contributed by D122. Q250 is a binding site for substrate. D278 contacts Mg(2+). Position 322-324 (322-324 (ESQ)) interacts with substrate. 2 residues coordinate ATP: D503 and G540. N541 is a Mg(2+) binding site. Residue S543 coordinates substrate.

The protein belongs to the FGAMS family. In terms of assembly, monomer. Part of the FGAM synthase complex composed of 1 PurL, 1 PurQ and 2 PurS subunits.

The protein resides in the cytoplasm. It catalyses the reaction N(2)-formyl-N(1)-(5-phospho-beta-D-ribosyl)glycinamide + L-glutamine + ATP + H2O = 2-formamido-N(1)-(5-O-phospho-beta-D-ribosyl)acetamidine + L-glutamate + ADP + phosphate + H(+). Its pathway is purine metabolism; IMP biosynthesis via de novo pathway; 5-amino-1-(5-phospho-D-ribosyl)imidazole from N(2)-formyl-N(1)-(5-phospho-D-ribosyl)glycinamide: step 1/2. Part of the phosphoribosylformylglycinamidine synthase complex involved in the purines biosynthetic pathway. Catalyzes the ATP-dependent conversion of formylglycinamide ribonucleotide (FGAR) and glutamine to yield formylglycinamidine ribonucleotide (FGAM) and glutamate. The FGAM synthase complex is composed of three subunits. PurQ produces an ammonia molecule by converting glutamine to glutamate. PurL transfers the ammonia molecule to FGAR to form FGAM in an ATP-dependent manner. PurS interacts with PurQ and PurL and is thought to assist in the transfer of the ammonia molecule from PurQ to PurL. This chain is Phosphoribosylformylglycinamidine synthase subunit PurL, found in Helicobacter hepaticus (strain ATCC 51449 / 3B1).